We begin with the raw amino-acid sequence, 133 residues long: U6 snRNA-associated Sm-like protein LSm1 (133 aa).

The 76-residue stretch at proline 5–glutamate 80 folds into the Sm domain. Serine 123 is subject to Phosphoserine. Threonine 129 is subject to Phosphothreonine.

The protein belongs to the snRNP Sm proteins family. Interacts with SLBP; interaction with SLBP occurs when histone mRNA is being rapidly degraded during the S phase. LSm subunits form a heteromer with a donut shape.

Its subcellular location is the cytoplasm. The protein localises to the P-body. Plays a role in the degradation of histone mRNAs, the only eukaryotic mRNAs that are not polyadenylated. Probably also part of an LSm subunits-containing complex involved in the general process of mRNA degradation. This is U6 snRNA-associated Sm-like protein LSm1 (LSM1) from Homo sapiens (Human).